The primary structure comprises 481 residues: NADH-quinone oxidoreductase subunit N (481 aa).

13 helical membrane-spanning segments follow: residues 9–29, 39–59, 76–96, 104–124, 158–178, 205–225, 232–252, 265–285, 293–313, 318–338, 359–379, 399–419, and 443–463; these read MLPE…GIVV, AVSM…DHVA, CISR…FLCA, FSVV…AGHF, FFIL…LVYG, AFVL…MWAV, PMAA…LLLA, ILYG…LGAL, LLAY…VLHG, AIFH…SVLL, FVAF…PFLG, VAFP…FYCF, and LGLT…LFLA.

Belongs to the complex I subunit 2 family. NDH-1 is composed of 14 different subunits. Subunits NuoA, H, J, K, L, M, N constitute the membrane sector of the complex.

The protein resides in the cell inner membrane. It carries out the reaction a quinone + NADH + 5 H(+)(in) = a quinol + NAD(+) + 4 H(+)(out). Its function is as follows. NDH-1 shuttles electrons from NADH, via FMN and iron-sulfur (Fe-S) centers, to quinones in the respiratory chain. The immediate electron acceptor for the enzyme in this species is believed to be ubiquinone. Couples the redox reaction to proton translocation (for every two electrons transferred, four hydrogen ions are translocated across the cytoplasmic membrane), and thus conserves the redox energy in a proton gradient. The protein is NADH-quinone oxidoreductase subunit N of Anaplasma marginale (strain Florida).